We begin with the raw amino-acid sequence, 507 residues long: ATP synthase subunit alpha, chloroplastic (507 aa).

170-177 is an ATP binding site; sequence GDRQTGKT.

Belongs to the ATPase alpha/beta chains family. As to quaternary structure, F-type ATPases have 2 components, CF(1) - the catalytic core - and CF(0) - the membrane proton channel. CF(1) has five subunits: alpha(3), beta(3), gamma(1), delta(1), epsilon(1). CF(0) has four main subunits: a, b, b' and c.

The protein resides in the plastid. Its subcellular location is the chloroplast thylakoid membrane. It catalyses the reaction ATP + H2O + 4 H(+)(in) = ADP + phosphate + 5 H(+)(out). Its function is as follows. Produces ATP from ADP in the presence of a proton gradient across the membrane. The alpha chain is a regulatory subunit. The protein is ATP synthase subunit alpha, chloroplastic of Sorghum bicolor (Sorghum).